Consider the following 423-residue polypeptide: Polyglutamylase complex subunit TTLL1 (423 aa).

The 367-residue stretch at 1-367 (MAGKVKWVTD…NGEIPDCKWN (367 aa)) folds into the TTL domain. Residues K138, 144–145 (QG), 181–184 (SLYI), and 194–196 (KFD) each bind ATP. Residue Q144 coordinates a protein. Residue R220 participates in L-glutamate binding. Residue 241–242 (TN) coordinates ATP. K259 provides a ligand contact to L-glutamate. The Mg(2+) site is built by D313, E326, and N328. K344 is a binding site for L-glutamate. Positions 391 to 423 (GADRELRSRQGQSLGPRAGRSRDSGRAVLTTWK) are disordered.

Belongs to the tubulin polyglutamylase family. In terms of assembly, part of the neuronal tubulin polyglutamylase complex which contains TPGS1, TPGS2, TTLL1, LRRC49 and NICN1. Interacts with PCM1, CSTPP1 and LRRC49. The cofactor is Mg(2+). In terms of tissue distribution, expressed in a wide range of tissues. Has a stronger expression in heart, brain and testis.

Its subcellular location is the cytoplasm. It is found in the cytoskeleton. It localises to the cilium basal body. The protein localises to the cilium axoneme. The protein resides in the cell projection. Its subcellular location is the cilium. It is found in the flagellum. The enzyme catalyses (L-glutamyl)(n)-gamma-L-glutamyl-L-glutamyl-[protein] + L-glutamate + ATP = (L-glutamyl)(n+1)-gamma-L-glutamyl-L-glutamyl-[protein] + ADP + phosphate + H(+). In terms of biological role, catalytic subunit of a polyglutamylase complex which modifies tubulin, generating side chains of glutamate on the gamma-carboxyl group of specific glutamate residues within the C-terminal tail of tubulin. Probably involved in the side-chain elongation step of the polyglutamylation reaction rather than the initiation step. Modifies both alpha- and beta-tubulins with a preference for the alpha-tail. Unlike most polyglutamylases of the tubulin--tyrosine ligase family, only displays a catalytic activity when in complex with other proteins as it is most likely lacking domains important for autonomous activity. Part of the neuronal tubulin polyglutamylase complex. Mediates cilia and flagella polyglutamylation which is essential for their biogenesis and motility. Involved in respiratory motile cilia function through the regulation of beating asymmetry. Essential for sperm flagella biogenesis, motility and male fertility. Involved in KLF4 glutamylation which impedes its ubiquitination, thereby leading to somatic cell reprogramming, pluripotency maintenance and embryogenesis. The polypeptide is Polyglutamylase complex subunit TTLL1 (Homo sapiens (Human)).